The sequence spans 357 residues: UDP-N-acetylglucosamine--N-acetylmuramyl-(pentapeptide) pyrophosphoryl-undecaprenol N-acetylglucosamine transferase (357 aa).

UDP-N-acetyl-alpha-D-glucosamine is bound by residues 12–14 (TGG), asparagine 124, arginine 163, serine 189, isoleucine 243, 262–267 (ALTVSE), and glutamine 288.

This sequence belongs to the glycosyltransferase 28 family. MurG subfamily.

It localises to the cell inner membrane. The enzyme catalyses di-trans,octa-cis-undecaprenyl diphospho-N-acetyl-alpha-D-muramoyl-L-alanyl-D-glutamyl-meso-2,6-diaminopimeloyl-D-alanyl-D-alanine + UDP-N-acetyl-alpha-D-glucosamine = di-trans,octa-cis-undecaprenyl diphospho-[N-acetyl-alpha-D-glucosaminyl-(1-&gt;4)]-N-acetyl-alpha-D-muramoyl-L-alanyl-D-glutamyl-meso-2,6-diaminopimeloyl-D-alanyl-D-alanine + UDP + H(+). It participates in cell wall biogenesis; peptidoglycan biosynthesis. Functionally, cell wall formation. Catalyzes the transfer of a GlcNAc subunit on undecaprenyl-pyrophosphoryl-MurNAc-pentapeptide (lipid intermediate I) to form undecaprenyl-pyrophosphoryl-MurNAc-(pentapeptide)GlcNAc (lipid intermediate II). This is UDP-N-acetylglucosamine--N-acetylmuramyl-(pentapeptide) pyrophosphoryl-undecaprenol N-acetylglucosamine transferase from Pseudomonas aeruginosa (strain LESB58).